Consider the following 89-residue polypeptide: Antimicrobial peptide Ar-AMP (89 aa).

The signal sequence occupies residues Met-1 to Gly-25. Residues Ala-26–Ala-68 form the Chitin-binding type-1 domain. 3 disulfides stabilise this stretch: Cys-29–Cys-40, Cys-34–Cys-46, and Cys-39–Cys-53. Positions Ala-56–Pro-89 are cleaved as a propeptide — removed in mature form.

Its function is as follows. Chitin-binding protein that inhibits the growth of the fungal pathogens B.cinerea, F.culmorum, H.sativum and A.consortiale, but not that of R.solani. Induces morphological changes in the fungal pathogens F.culmorum, H.sativum and R.solani, but not in A.consortiale and B.cinerea. Has antibacterial activity against the Gram-positive bacterium B.subtilis, but lacks antibacterial activity against the Gram-negative bacterium E.coli. The chain is Antimicrobial peptide Ar-AMP from Amaranthus retroflexus (Redroot amaranth).